The chain runs to 196 residues: Aequorin-2 (196 aa).

Positions Met-1 to Ser-7 are excised as a propeptide. EF-hand domains are found at residues Arg-18–Asn-53, Asn-54–Glu-108, Asp-117–Ile-146, and Gln-147–Thr-182. Positions 31, 33, 35, 37, and 42 each coordinate Ca(2+). May interact with the chromophore stretches follow at residues Ala-47–Ala-57, Ala-62–Phe-72, and Asn-107–Asp-117. 9 residues coordinate Ca(2+): Asp-124, Asp-126, Asn-128, Glu-135, Asp-160, Asp-162, Ser-164, Gln-166, and Glu-171.

The protein belongs to the aequorin family. The reduction of the disulfide bond is necessary to regenerate aequorin from apoaequorin.

Ca(2+)-dependent bioluminescence photoprotein. Displays an emission peak at 470 nm (blue light). Trace amounts of calcium ion trigger the intramolecular oxidation of the chromophore, coelenterazine into coelenteramide and CO(2) with the concomitant emission of light. In Aequorea victoria (Water jellyfish), this protein is Aequorin-2.